Reading from the N-terminus, the 98-residue chain is MATLTGLTFGGQVWTPQFVEAVNQDKCIGCGRCFKACGRNVLILQALNENGEFVEDEEGEEIERKVMSIIHPEYCIGCQACARACPKNCYTHSPLEHN.

4Fe-4S ferredoxin-type domains lie at Phe18 to Leu47 and Val66 to Leu95. The [4Fe-4S] cluster site is built by Cys27, Cys30, Cys33, Cys37, Cys75, Cys78, Cys81, and Cys85.

Homodimer. The cofactor is [4Fe-4S] cluster.

In terms of biological role, ferredoxins are iron-sulfur proteins that transfer electrons in a wide variety of metabolic reactions. The protein is Ferredoxin-3 (fdxB) of Trichormus variabilis (strain ATCC 29413 / PCC 7937) (Anabaena variabilis).